Reading from the N-terminus, the 342-residue chain is Succinylglutamate desuccinylase (342 aa).

3 residues coordinate Zn(2+): His63, Glu66, and His155. Residue Glu219 is part of the active site.

The protein belongs to the AspA/AstE family. Succinylglutamate desuccinylase subfamily. Requires Zn(2+) as cofactor.

The enzyme catalyses N-succinyl-L-glutamate + H2O = L-glutamate + succinate. It functions in the pathway amino-acid degradation; L-arginine degradation via AST pathway; L-glutamate and succinate from L-arginine: step 5/5. In terms of biological role, transforms N(2)-succinylglutamate into succinate and glutamate. In Vibrio cholerae serotype O1 (strain ATCC 39315 / El Tor Inaba N16961), this protein is Succinylglutamate desuccinylase.